The sequence spans 209 residues: MATPLSPAFFDRDPVKVAREVLGSTLVRVLPGGEVLSGRVVEVEAYDCPRDPACTAGRFHAARTAEMAISPGHWLFWTAHGHPLLQVSCREKGIPASILIRALEPLTGLGSMLTHRPVSRERELTNGPAKLVSALGLKPAEVVGTRVDSPALHLLPPPALLPADAVTVTARIGIKEGRNLPWRFLLRGNPWVSPGVPSMDLAGPLTAKS.

Belongs to the DNA glycosylase MPG family.

The polypeptide is Putative 3-methyladenine DNA glycosylase (Deinococcus geothermalis (strain DSM 11300 / CIP 105573 / AG-3a)).